We begin with the raw amino-acid sequence, 96 residues long: UPF0213 protein BCE_0033 (96 aa).

The GIY-YIG domain maps to 4–79 (NKHCFYVVEC…KQLNRKQKEE (76 aa)).

Belongs to the UPF0213 family.

This chain is UPF0213 protein BCE_0033, found in Bacillus cereus (strain ATCC 10987 / NRS 248).